Consider the following 468-residue polypeptide: Zinc finger CCCH domain-containing protein 32 (468 aa).

The tract at residues methionine 1–aspartate 25 is disordered. C3H1-type zinc fingers lie at residues arginine 45–aspartate 73, arginine 90–asparagine 118, arginine 136–proline 164, arginine 289–aspartate 317, and arginine 335–glycine 363.

Its subcellular location is the nucleus. The polypeptide is Zinc finger CCCH domain-containing protein 32 (Arabidopsis thaliana (Mouse-ear cress)).